The following is a 114-amino-acid chain: Macrophage migration inhibitory factor homolog (114 aa).

Pro-2 functions as the Proton acceptor; via imino nitrogen in the catalytic mechanism. Lys-33 and Asn-98 together coordinate substrate.

The protein belongs to the MIF family.

The protein resides in the secreted. The catalysed reaction is L-dopachrome = 5,6-dihydroxyindole-2-carboxylate. The enzyme catalyses 3-phenylpyruvate = enol-phenylpyruvate. Tautomerization of the methyl ester of L-dopachrome. Inhibits migration of human peripheral blood mononuclear cells. This chain is Macrophage migration inhibitory factor homolog, found in Trichuris trichiura (Whipworm).